The following is a 183-amino-acid chain: Inner membrane-spanning protein YciB (183 aa).

Transmembrane regions (helical) follow at residues 22 to 44 (IYTA…WVRY), 54 to 74 (TFLL…DAFI), 76 to 96 (WKVT…RYGF), 119 to 139 (VNLA…YVAF), and 149 to 169 (FKVF…GVYL).

The protein belongs to the YciB family.

The protein localises to the cell inner membrane. Its function is as follows. Plays a role in cell envelope biogenesis, maintenance of cell envelope integrity and membrane homeostasis. The polypeptide is Inner membrane-spanning protein YciB (Aeromonas salmonicida (strain A449)).